A 169-amino-acid chain; its full sequence is Cuticle protein 21 (169 aa).

Tandem repeats lie at residues 21–24 (AAPV), 27–30 (AAPA), 33–36 (AAPV), 39–42 (AAPA), 47–50 (AAPV), and 53–56 (AAPA). In terms of domain architecture, Chitin-binding type R&amp;R spans 65–135 (NPQYSYAYNV…KEAGAHPAPV (71 aa)). Repeat copies occupy residues 140-143 (AAPV), 146-149 (AAPA), and 160-163 (AAPA).

In terms of biological role, component of the cuticle of migratory locust which contains more than 100 different structural proteins. This Locusta migratoria (Migratory locust) protein is Cuticle protein 21 (ACP21).